The chain runs to 130 residues: Transcription antitermination protein NusB (130 aa).

The protein belongs to the NusB family.

Involved in transcription antitermination. Required for transcription of ribosomal RNA (rRNA) genes. Binds specifically to the boxA antiterminator sequence of the ribosomal RNA (rrn) operons. In Macrococcus caseolyticus (strain JCSC5402) (Macrococcoides caseolyticum), this protein is Transcription antitermination protein NusB.